Consider the following 102-residue polypeptide: Synaptobrevin-like protein 5 (102 aa).

Residues 17 to 77 (KIMRTRRELD…VKIKREMSWK (61 aa)) enclose the v-SNARE coiled-coil homology domain.

In Caenorhabditis elegans, this protein is Synaptobrevin-like protein 5 (snb-5).